The primary structure comprises 299 residues: Cytosolic sulfotransferase 1 (299 aa).

51–56 (KAGTTW) contributes to the 3'-phosphoadenylyl sulfate binding site. The Proton acceptor role is filled by His113. Residues Arg135, Ser143, Tyr199, 233 to 238 (VQFDAM), and 261 to 263 (RKG) each bind 3'-phosphoadenylyl sulfate.

This sequence belongs to the sulfotransferase 1 family. As to expression, expressed in liver.

It is found in the cytoplasm. Inhibited by Co(2+), Zn(2+), Cd(2+) and Pb(2+) ions. Inactivated by Hg(2+) and Cu(2+) ions. Functionally, sulfotransferase that utilizes 3'-phospho-5'-adenylyl sulfate (PAPS) as sulfonate donor to catalyze the sulfate conjugation of a variety of xenobiotic and endogenous compounds, including 2-naphthol, hydroxychlorobiphenyls, dopamine and T3 (triiodo-L-thyronine). The sequence is that of Cytosolic sulfotransferase 1 from Danio rerio (Zebrafish).